Reading from the N-terminus, the 69-residue chain is MMKTRACSNPMNEGVNLEQIPYDLVLEILLKLSAKSIARFRCVSKLWDSTFRSRYFTELLFIISSSMQI.

The 46-residue stretch at 14-59 (GVNLEQIPYDLVLEILLKLSAKSIARFRCVSKLWDSTFRSRYFTEL) folds into the F-box domain.

The polypeptide is Putative F-box protein At2g33705 (Arabidopsis thaliana (Mouse-ear cress)).